The primary structure comprises 121 residues: MTIEQILEAIENMKVLELNELVKAAEEKFGVSASAPVMVAGAAAGGPAAEEKTEFDVVLTDVGSSKVGVIKAVREITGLGLKEAKEVVDNAPKTVKEGASKEEADQIKEKLEAAGAKVEVK.

Belongs to the bacterial ribosomal protein bL12 family. In terms of assembly, homodimer. Part of the ribosomal stalk of the 50S ribosomal subunit. Forms a multimeric L10(L12)X complex, where L10 forms an elongated spine to which 2 to 4 L12 dimers bind in a sequential fashion. Binds GTP-bound translation factors.

Its function is as follows. Forms part of the ribosomal stalk which helps the ribosome interact with GTP-bound translation factors. Is thus essential for accurate translation. The sequence is that of Large ribosomal subunit protein bL12 from Clostridioides difficile (strain 630) (Peptoclostridium difficile).